A 381-amino-acid polypeptide reads, in one-letter code: Orotidine 5'-phosphate decarboxylase (381 aa).

Residues aspartate 42, 64–66 (KTH), 99–108 (DRKFGDIGHT), tyrosine 333, and arginine 352 contribute to the substrate site. Lysine 101 acts as the Proton donor in catalysis. The segment at 311 to 333 (LPPEDEDQQTNGSVGGDGQGQQY) is disordered.

The protein belongs to the OMP decarboxylase family.

The enzyme catalyses orotidine 5'-phosphate + H(+) = UMP + CO2. It participates in pyrimidine metabolism; UMP biosynthesis via de novo pathway; UMP from orotate: step 2/2. The sequence is that of Orotidine 5'-phosphate decarboxylase (ura3) from Hypocrea jecorina (Trichoderma reesei).